Consider the following 112-residue polypeptide: ATP synthase epsilon chain (112 aa).

This sequence belongs to the ATPase epsilon chain family. As to quaternary structure, F-type ATPases have 2 components, CF(1) - the catalytic core - and CF(0) - the membrane proton channel. CF(1) has five subunits: alpha(3), beta(3), gamma(1), delta(1), epsilon(1). CF(0) has three main subunits: a, b and c.

It is found in the cell inner membrane. Its function is as follows. Produces ATP from ADP in the presence of a proton gradient across the membrane. This Rickettsia rickettsii (strain Sheila Smith) protein is ATP synthase epsilon chain.